The primary structure comprises 340 residues: Cysteinyl leukotriene receptor 1 (340 aa).

The Extracellular portion of the chain corresponds to 1–31; it reads MDETGNPTIPPASNNTCYDSIDDFRNQVYST. N-linked (GlcNAc...) asparagine glycosylation occurs at asparagine 14. A helical transmembrane segment spans residues 32–52; it reads LYSMISVVGFFGNGFVLYVLV. Over 53-60 the chain is Cytoplasmic; it reads KTYHEKSA. A helical membrane pass occupies residues 61-81; sequence FQVYMINLAVADLLCVCTLPL. Topologically, residues 82 to 109 are extracellular; the sequence is RVAYYVHKGIWLFGDFLCRLSTYALYVN. Cysteines 99 and 176 form a disulfide. A helical membrane pass occupies residues 110–130; it reads LYCSIFFMTAMSFFRCVAIVF. Residues 131-144 lie on the Cytoplasmic side of the membrane; that stretch reads PVQNISLVTQKKAR. The chain crosses the membrane as a helical span at residues 145-165; the sequence is LVCIAIWMFVILTSSPFLMAN. Residues 166–196 lie on the Extracellular side of the membrane; the sequence is TYKDEKNNTKCFEPPQDNQAKNYVLILHYVS. Residue asparagine 172 is glycosylated (N-linked (GlcNAc...) asparagine). The helical transmembrane segment at 197–217 threads the bilayer; it reads LFIGFIIPFITIIVCYTMIIF. Residues 218–233 are Cytoplasmic-facing; the sequence is TLLKSSMKKNLSSRKR. Residues 234 to 254 form a helical membrane-spanning segment; that stretch reads AIGMIIVVTAAFLVSFMPYHI. The Extracellular portion of the chain corresponds to 255–279; the sequence is QRTIHLHFLHNKTKPCDSILRMQKS. Asparagine 265 carries an N-linked (GlcNAc...) asparagine glycan. A helical transmembrane segment spans residues 280 to 300; sequence VVITLSLAASNCCFDPLLYFF. At 301–340 the chain is on the cytoplasmic side; it reads SGGNFRRRLSTIRKYSLSSMTYIPKKKTSLPQKGKDICKE.

Belongs to the G-protein coupled receptor 1 family.

The protein localises to the cell membrane. In terms of biological role, receptor for cysteinyl leukotrienes mediating bronchoconstriction of individuals with and without asthma. Stimulation by LTD4 results in the contraction and proliferation of smooth muscle, edema, eosinophil migration and damage to the mucus layer in the lung. This response is mediated via a G-protein that activates a phosphatidylinositol-calcium second messenger system. This is Cysteinyl leukotriene receptor 1 (CYSLTR1) from Cavia porcellus (Guinea pig).